Reading from the N-terminus, the 69-residue chain is Sperm protamine P1 (69 aa).

The interval 1–69 is disordered; it reads MARYRHSRSR…YSRRRRRRYY (69 aa).

This sequence belongs to the protamine P1 family. As to expression, testis.

It is found in the nucleus. It localises to the chromosome. Protamines substitute for histones in the chromatin of sperm during the haploid phase of spermatogenesis. They compact sperm DNA into a highly condensed, stable and inactive complex. This chain is Sperm protamine P1 (PRM1), found in Pseudochirops cupreus (Coppery ringtail).